The primary structure comprises 884 residues: Bifunctional heparan sulfate N-deacetylase/N-sulfotransferase 2 (884 aa).

Residues Met1–Arg18 lie on the Cytoplasmic side of the membrane. Residues Leu19–Ser39 form a helical; Signal-anchor for type II membrane protein membrane-spanning segment. Over Thr40 to Gly884 the chain is Lumenal. Residues Ser41–Glu598 form a heparan sulfate N-deacetylase 2 region. Residues Pro49–Ala82 are disordered. Residues Pro66–Pro79 are compositionally biased toward pro residues. Residues Asn351 and Asn401 are each glycosylated (N-linked (GlcNAc...) asparagine). The interval Lys599 to Gly884 is heparan sulfate N-sulfotransferase 2. Catalysis depends on Lys614, which acts as the For sulfotransferase activity. Lys614–Thr618 serves as a coordination point for 3'-phosphoadenylyl sulfate. Asn667 carries N-linked (GlcNAc...) asparagine glycosylation. Ser712 serves as a coordination point for 3'-phosphoadenylyl sulfate. Asn727 and Asn803 each carry an N-linked (GlcNAc...) asparagine glycan. A disulfide bond links Cys818 and Cys828. Lys833–Tyr837 is a binding site for 3'-phosphoadenylyl sulfate.

Belongs to the sulfotransferase 1 family. NDST subfamily. Monomer.

Its subcellular location is the golgi apparatus membrane. It catalyses the reaction alpha-D-glucosaminyl-[heparan sulfate](n) + 3'-phosphoadenylyl sulfate = N-sulfo-alpha-D-glucosaminyl-[heparan sulfate](n) + adenosine 3',5'-bisphosphate + 2 H(+). The protein operates within glycan metabolism; heparan sulfate biosynthesis. Its pathway is glycan metabolism; heparin biosynthesis. Functionally, essential bifunctional enzyme that catalyzes both the N-deacetylation and the N-sulfation of glucosamine (GlcNAc) of the glycosaminoglycan in heparan sulfate. Modifies the GlcNAc-GlcA disaccharide repeating sugar backbone to make N-sulfated heparosan, a prerequisite substrate for later modifications in heparin biosynthesis. Plays a role in determining the extent and pattern of sulfation of heparan sulfate. Required for the exosomal release of SDCBP, CD63 and syndecan. This chain is Bifunctional heparan sulfate N-deacetylase/N-sulfotransferase 2 (NDST2), found in Bos taurus (Bovine).